A 40-amino-acid polypeptide reads, in one-letter code: LVAHEENVRVGKDEGFAKAGGLSRLPLEAGESGTATFNVR.

It carries out the reaction Hydrolysis of terminal, non-reducing beta-D-glucosyl residues with release of beta-D-glucose.. The polypeptide is Beta-glucosidase 1 (Passalora fulva (Tomato leaf mold)).